A 505-amino-acid polypeptide reads, in one-letter code: Chromosomal replication initiator protein DnaA (505 aa).

Residues 1–90 (MSVELWQQCV…RRSSAPRAAP (90 aa)) are domain I, interacts with DnaA modulators. The interval 91–168 (NAPVSAAVAA…QVEGALKHTS (78 aa)) is domain II. Residues 169-385 (YLNRTFTFDT…GALKRVIAHS (217 aa)) form a domain III, AAA+ region region. Residues Gly-213, Gly-215, Lys-216, and Thr-217 each contribute to the ATP site. Positions 386 to 505 (HFMGRDITIE…YKNLLRTLTT (120 aa)) are domain IV, binds dsDNA.

The protein belongs to the DnaA family. Oligomerizes as a right-handed, spiral filament on DNA at oriC.

Its subcellular location is the cytoplasm. Its function is as follows. Plays an essential role in the initiation and regulation of chromosomal replication. ATP-DnaA binds to the origin of replication (oriC) to initiate formation of the DNA replication initiation complex once per cell cycle. Binds the DnaA box (a 9 base pair repeat at the origin) and separates the double-stranded (ds)DNA. Forms a right-handed helical filament on oriC DNA; dsDNA binds to the exterior of the filament while single-stranded (ss)DNA is stabiized in the filament's interior. The ATP-DnaA-oriC complex binds and stabilizes one strand of the AT-rich DNA unwinding element (DUE), permitting loading of DNA polymerase. After initiation quickly degrades to an ADP-DnaA complex that is not apt for DNA replication. Binds acidic phospholipids. The chain is Chromosomal replication initiator protein DnaA from Pseudomonas putida (strain ATCC 700007 / DSM 6899 / JCM 31910 / BCRC 17059 / LMG 24140 / F1).